Reading from the N-terminus, the 218-residue chain is Large ribosomal subunit protein uL3 (218 aa).

Positions arginine 133 to glycine 158 are disordered.

It belongs to the universal ribosomal protein uL3 family. In terms of assembly, part of the 50S ribosomal subunit. Forms a cluster with proteins L14 and L19.

One of the primary rRNA binding proteins, it binds directly near the 3'-end of the 23S rRNA, where it nucleates assembly of the 50S subunit. The sequence is that of Large ribosomal subunit protein uL3 from Mycolicibacterium vanbaalenii (strain DSM 7251 / JCM 13017 / BCRC 16820 / KCTC 9966 / NRRL B-24157 / PYR-1) (Mycobacterium vanbaalenii).